A 361-amino-acid polypeptide reads, in one-letter code: D-alanine--D-alanine ligase (361 aa).

In terms of domain architecture, ATP-grasp spans 144-350 (KLAAADAGLA…FMELTDRLIR (207 aa)). 177–232 (VASLSFPMFVKPVSLGSSVGITKVNSESELAEAITHACSLDSKVLIEQAVKGREVE) is an ATP binding site. Residues D303, E317, and N319 each contribute to the Mg(2+) site.

This sequence belongs to the D-alanine--D-alanine ligase family. Requires Mg(2+) as cofactor. Mn(2+) serves as cofactor.

Its subcellular location is the cytoplasm. The catalysed reaction is 2 D-alanine + ATP = D-alanyl-D-alanine + ADP + phosphate + H(+). It participates in cell wall biogenesis; peptidoglycan biosynthesis. Functionally, cell wall formation. The chain is D-alanine--D-alanine ligase from Chlorobium luteolum (strain DSM 273 / BCRC 81028 / 2530) (Pelodictyon luteolum).